A 624-amino-acid polypeptide reads, in one-letter code: Phosphomethylpyrimidine synthase (624 aa).

Substrate-binding positions include Asn231, Met260, Tyr289, His325, 345–347, 386–389, and Glu425; these read SRG and DGLR. His429 is a binding site for Zn(2+). Tyr452 contacts substrate. Residue His493 coordinates Zn(2+). Positions 573, 576, and 581 each coordinate [4Fe-4S] cluster.

Belongs to the ThiC family. As to quaternary structure, homodimer. Requires [4Fe-4S] cluster as cofactor.

It catalyses the reaction 5-amino-1-(5-phospho-beta-D-ribosyl)imidazole + S-adenosyl-L-methionine = 4-amino-2-methyl-5-(phosphooxymethyl)pyrimidine + CO + 5'-deoxyadenosine + formate + L-methionine + 3 H(+). Its pathway is cofactor biosynthesis; thiamine diphosphate biosynthesis. In terms of biological role, catalyzes the synthesis of the hydroxymethylpyrimidine phosphate (HMP-P) moiety of thiamine from aminoimidazole ribotide (AIR) in a radical S-adenosyl-L-methionine (SAM)-dependent reaction. The protein is Phosphomethylpyrimidine synthase of Myxococcus xanthus (strain DK1622).